The following is a 264-amino-acid chain: Proteasome subunit beta type-4 (264 aa).

Methionine 1 bears the N-acetylmethionine mark. Residues 1 to 45 constitute a propeptide that is removed on maturation; it reads MEALLESRSGLWAGGPAPGQFYRIPPTPGSSVDPVSALYGSPITR. Tyrosine 102 is subject to Phosphotyrosine.

The protein belongs to the peptidase T1B family. In terms of assembly, the 26S proteasome consists of a 20S proteasome core and two 19S regulatory subunits. The 20S proteasome core is a barrel-shaped complex made of 28 subunits that are arranged in four stacked rings. The two outer rings are each formed by seven alpha subunits, and the two inner rings are formed by seven beta subunits. The proteolytic activity is exerted by three beta-subunits PSMB5, PSMB6 and PSMB7. Forms a ternary complex with SMAD1 and OAZ1 before PSMB4 is incorporated into the 20S proteasome. Interacts with PRPF19.

The protein resides in the cytoplasm. It localises to the nucleus. Its function is as follows. Non-catalytic component of the 20S core proteasome complex involved in the proteolytic degradation of most intracellular proteins. This complex plays numerous essential roles within the cell by associating with different regulatory particles. Associated with two 19S regulatory particles, forms the 26S proteasome and thus participates in the ATP-dependent degradation of ubiquitinated proteins. The 26S proteasome plays a key role in the maintenance of protein homeostasis by removing misfolded or damaged proteins that could impair cellular functions, and by removing proteins whose functions are no longer required. Associated with the PA200 or PA28, the 20S proteasome mediates ubiquitin-independent protein degradation. This type of proteolysis is required in several pathways including spermatogenesis (20S-PA200 complex) or generation of a subset of MHC class I-presented antigenic peptides (20S-PA28 complex). SMAD1/OAZ1/PSMB4 complex mediates the degradation of the CREBBP/EP300 repressor SNIP1. This is Proteasome subunit beta type-4 (PSMB4) from Bos taurus (Bovine).